We begin with the raw amino-acid sequence, 256 residues long: H-2 class II histocompatibility antigen, A-B alpha chain (256 aa).

Residues 1–23 (MPRSRALILGVLALTTMLSLCGG) form the signal peptide. Residues 24-111 (EDDIEADHVG…KRSNSTPATN (88 aa)) are alpha-1. Residues 24-218 (EDDIEADHVG…IPAPMSELTE (195 aa)) lie on the Extracellular side of the membrane. The interval 112 to 205 (EAPQATVFPK…GLEEPVLKHW (94 aa)) is alpha-2. The region spanning 114 to 206 (PQATVFPKSP…LEEPVLKHWE (93 aa)) is the Ig-like C1-type domain. Residues cysteine 134 and cysteine 190 are joined by a disulfide bond. A glycan (N-linked (GlcNAc...) asparagine) is linked at asparagine 145. Residues 206–218 (EPEIPAPMSELTE) are connecting peptide. A helical transmembrane segment spans residues 219-244 (TVVCALGLSVGLVGIVVGTIFIIQGL). The Cytoplasmic portion of the chain corresponds to 245–256 (RSGGTSRHPGPL).

Belongs to the MHC class II family.

The protein localises to the membrane. In Mus musculus (Mouse), this protein is H-2 class II histocompatibility antigen, A-B alpha chain (H2-Aa).